We begin with the raw amino-acid sequence, 443 residues long: Threonine/serine transporter TdcC (443 aa).

A run of 11 helical transmembrane segments spans residues 22 to 42 (TTWTLGLFGTAIGAGVLFFPI), 44 to 64 (AGFGGLIPILVMLVLAYPIAF), 97 to 117 (GVVITFLYFFAICPLLWIYGV), 135 to 155 (ALNRGFVALFLLLLMAVIIWF), 163 to 183 (VMSFLVWPFIASLVLISLSLI), 207 to 227 (ILVTVWLGISIMVFSFNFSPI), 259 to 279 (ASILMVAVVMFFAFSCLFALS), 319 to 339 (ASIIALVAIFKSFFGHYLGTL), 366 to 386 (LSMVFIMGSTWLVAYVNPNIL), 389 to 409 (IEAMGAPIIASLLCLLPMYAI), and 422 to 442 (IDNVFVTAIGLLTISNIVYKV).

It belongs to the amino acid/polyamine transporter 2 family. SdaC/TdcC subfamily.

The protein localises to the cell inner membrane. It catalyses the reaction L-threonine(in) + H(+)(in) = L-threonine(out) + H(+)(out). It carries out the reaction L-serine(in) + H(+)(in) = L-serine(out) + H(+)(out). In terms of biological role, involved in the import of threonine and serine into the cell, with the concomitant import of a proton (symport system). The sequence is that of Threonine/serine transporter TdcC from Escherichia fergusonii (strain ATCC 35469 / DSM 13698 / CCUG 18766 / IAM 14443 / JCM 21226 / LMG 7866 / NBRC 102419 / NCTC 12128 / CDC 0568-73).